The sequence spans 220 residues: Claudin-6 (220 aa).

Topologically, residues 1-7 are cytoplasmic; sequence MASAGMQ. A helical transmembrane segment spans residues 8 to 28; it reads ILGVVLTLLGWVNGLVSCALP. Topologically, residues 29–81 are extracellular; it reads MWKVTAFIGNSIVVAQVVWEGLWMSCVVQSTGQMQCKVYDSLLALPQDLQAAR. Residues 82 to 102 traverse the membrane as a helical segment; the sequence is ALCVIALLVALFGLLVYLAGA. Residues 103-116 lie on the Cytoplasmic side of the membrane; it reads KCTTCVEEKDSKAR. Residues 117–137 traverse the membrane as a helical segment; it reads LVLTSGIVFVISGVLTLIPVC. Residues 138–160 are Extracellular-facing; it reads WTAHAIIRDFYNPLVAEAQKREL. The chain crosses the membrane as a helical span at residues 161 to 181; it reads GASLYLGWAASGLLLLGGGLL. The Cytoplasmic segment spans residues 182 to 220; that stretch reads CCTCPSGGSQGPSHYMARYSTSAPAISRGPSEYPTKNYV. Phosphoserine occurs at positions 201, 203, 208, and 212. Residues 219–220 form an interactions with TJP1, TJP2 and TJP3 region; that stretch reads YV.

This sequence belongs to the claudin family. As to quaternary structure, directly interacts with TJP1/ZO-1, TJP2/ZO-2 and TJP3/ZO-3. Interacts with CLDN1, CD81 and OCLN. In terms of tissue distribution, expressed in the liver, in peripheral blood mononuclear cells and hepatocarcinoma cell lines.

Its subcellular location is the cell junction. The protein localises to the tight junction. The protein resides in the cell membrane. Its function is as follows. Plays a major role in tight junction-specific obliteration of the intercellular space. Functionally, (Microbial infection) Acts as a receptor for hepatitis C virus (HCV) entry into hepatic cells. This chain is Claudin-6 (CLDN6), found in Homo sapiens (Human).